A 415-amino-acid polypeptide reads, in one-letter code: Putative F-box/FBD/LRR-repeat protein At3g49040 (415 aa).

Positions 10 to 58 (EDRISELHEALLVHIMSSLPTKTVVATSVLSKRWRHVWKTVQNLKFVSK) constitute an F-box domain. LRR repeat units follow at residues 60–86 (HQTF…DLEF), 87–114 (SNQL…VLDL), 143–170 (TLTL…HLYK), 171–196 (VHFY…IVHR), and 213–241 (RLTI…NIRR). An FBD domain is found at 272 to 377 (ILESLTSAKR…TSLKKATFST (106 aa)).

This chain is Putative F-box/FBD/LRR-repeat protein At3g49040, found in Arabidopsis thaliana (Mouse-ear cress).